A 204-amino-acid polypeptide reads, in one-letter code: Outer-membrane lipoprotein carrier protein (204 aa).

A signal peptide spans 1–21 (MKKYLNLTALLLVGISNVTWA).

This sequence belongs to the LolA family. Monomer.

The protein localises to the periplasm. Functionally, participates in the translocation of lipoproteins from the inner membrane to the outer membrane. Only forms a complex with a lipoprotein if the residue after the N-terminal Cys is not an aspartate (The Asp acts as a targeting signal to indicate that the lipoprotein should stay in the inner membrane). The chain is Outer-membrane lipoprotein carrier protein from Histophilus somni (strain 2336) (Haemophilus somnus).